A 1357-amino-acid polypeptide reads, in one-letter code: Kinectin (1357 aa).

Residues 1–6 (MEFYES) are Cytoplasmic-facing. Residues 7–29 (AYFIVLIPSIVITVIFLFFWLFM) traverse the membrane as a helical; Signal-anchor for type II membrane protein segment. At 30-1357 (KETLYDEVLA…KEKEHYQVLE (1328 aa)) the chain is on the lumenal side. Disordered regions lie at residues 48–81 (IPTK…ESVP) and 103–218 (NVVE…KQKT). Residue serine 75 is modified to Phosphoserine; by FAM20C. Position 77 is a phosphoserine (serine 77). Over residues 121-135 (QKPVLEEQVIKESDA) the composition is skewed to basic and acidic residues. Threonine 153 carries the phosphothreonine modification. At serine 156 the chain carries Phosphoserine. Residues 161-171 (SKKKPGQKKSK) are compositionally biased toward basic residues. N-linked (GlcNAc...) asparagine glycosylation is found at asparagine 172, asparagine 435, asparagine 772, asparagine 904, and asparagine 1055. Over residues 172–182 (NGSDDQDKKVE) the composition is skewed to basic and acidic residues. Positions 330–1356 (LIHQLQEKDK…TKEKEHYQVL (1027 aa)) form a coiled coil. A Phosphoserine modification is found at serine 1084. 2 N-linked (GlcNAc...) asparagine glycosylation sites follow: asparagine 1088 and asparagine 1263. Serine 1313 is subject to Phosphoserine. Asparagine 1329 carries N-linked (GlcNAc...) asparagine glycosylation.

Belongs to the kinectin family. In terms of assembly, parallel homodimers formed between the membrane-bound and the cytosolic form, and also between 2 cytosolic forms. In terms of tissue distribution, high levels in peripheral blood lymphocytes, testis and ovary, lower levels in spleen, thymus, prostate, small intestine and colon.

Its subcellular location is the endoplasmic reticulum membrane. Receptor for kinesin thus involved in kinesin-driven vesicle motility. Accumulates in integrin-based adhesion complexes (IAC) upon integrin aggregation by fibronectin. The sequence is that of Kinectin (KTN1) from Homo sapiens (Human).